The sequence spans 475 residues: Aspartyl/glutamyl-tRNA(Asn/Gln) amidotransferase subunit B (475 aa).

It belongs to the GatB/GatE family. GatB subfamily. In terms of assembly, heterotrimer of A, B and C subunits.

It carries out the reaction L-glutamyl-tRNA(Gln) + L-glutamine + ATP + H2O = L-glutaminyl-tRNA(Gln) + L-glutamate + ADP + phosphate + H(+). The enzyme catalyses L-aspartyl-tRNA(Asn) + L-glutamine + ATP + H2O = L-asparaginyl-tRNA(Asn) + L-glutamate + ADP + phosphate + 2 H(+). Functionally, allows the formation of correctly charged Asn-tRNA(Asn) or Gln-tRNA(Gln) through the transamidation of misacylated Asp-tRNA(Asn) or Glu-tRNA(Gln) in organisms which lack either or both of asparaginyl-tRNA or glutaminyl-tRNA synthetases. The reaction takes place in the presence of glutamine and ATP through an activated phospho-Asp-tRNA(Asn) or phospho-Glu-tRNA(Gln). The polypeptide is Aspartyl/glutamyl-tRNA(Asn/Gln) amidotransferase subunit B (Chromobacterium violaceum (strain ATCC 12472 / DSM 30191 / JCM 1249 / CCUG 213 / NBRC 12614 / NCIMB 9131 / NCTC 9757 / MK)).